The sequence spans 163 residues: Cell division protein SepF (163 aa).

Residues Ser25–Thr53 are disordered. The segment covering Ser30–Arg51 has biased composition (basic and acidic residues).

The protein belongs to the SepF family. In terms of assembly, homodimer. Interacts with FtsZ.

Its subcellular location is the cytoplasm. In terms of biological role, cell division protein that is part of the divisome complex and is recruited early to the Z-ring. Probably stimulates Z-ring formation, perhaps through the cross-linking of FtsZ protofilaments. Its function overlaps with FtsA. In Heliobacterium modesticaldum (strain ATCC 51547 / Ice1), this protein is Cell division protein SepF.